The following is an 883-amino-acid chain: Integrator complex subunit 6-A (883 aa).

In terms of domain architecture, VWFA spans isoleucine 3–valine 227. Positions methionine 626–glutamate 633 match the Inhibitory loop motif.

The protein belongs to the Integrator subunit 6 family. Component of the Integrator complex, composed of core subunits INTS1, INTS2, INTS3, INTS4, INTS5, INTS6, INTS7, INTS8, INTS9/RC74, INTS10, INTS11/CPSF3L, INTS12, INTS13, INTS14 and INTS15. The core complex associates with protein phosphatase 2A subunits PPP2CA and PPP2R1A, to form the Integrator-PP2A (INTAC) complex.

Its subcellular location is the nucleus. It localises to the chromosome. Component of the integrator complex, a multiprotein complex that terminates RNA polymerase II (Pol II) transcription in the promoter-proximal region of genes. The integrator complex provides a quality checkpoint during transcription elongation by driving premature transcription termination of transcripts that are unfavorably configured for transcriptional elongation: the complex terminates transcription by (1) catalyzing dephosphorylation of the C-terminal domain (CTD) of Pol II subunit POLR2A/RPB1 and SUPT5H/SPT5, (2) degrading the exiting nascent RNA transcript via endonuclease activity and (3) promoting the release of Pol II from bound DNA. The integrator complex is also involved in terminating the synthesis of non-coding Pol II transcripts, such as enhancer RNAs (eRNAs), small nuclear RNAs (snRNAs), telomerase RNAs and long non-coding RNAs (lncRNAs). Within the integrator complex, INTS6 acts as a molecular adapter that promotes assembly of protein phosphatase 2A (PP2A) subunits to the integrator core complex, promoting recruitment of PP2A to transcription pause-release checkpoint. This Xenopus laevis (African clawed frog) protein is Integrator complex subunit 6-A (ints6-a).